A 308-amino-acid polypeptide reads, in one-letter code: Cytochrome b (308 aa).

Transmembrane regions (helical) follow at residues 1-21, 45-66, 81-101, and 146-166; these read FGSL…LLAM, WLIR…YLHI, WNIG…GYVL, and FFAF…VHLT. H51 and H65 together coordinate heme b. Heme b is bound by residues H150 and H164. An a ubiquinone-binding site is contributed by H169. The next 3 helical transmembrane spans lie at 194–214, 256–276, and 288–308; these read IKDL…ALFS, LGGV…PLLH, and LSQI…WVGS.

This sequence belongs to the cytochrome b family. The cytochrome bc1 complex contains 11 subunits: 3 respiratory subunits (MT-CYB, CYC1 and UQCRFS1), 2 core proteins (UQCRC1 and UQCRC2) and 6 low-molecular weight proteins (UQCRH/QCR6, UQCRB/QCR7, UQCRQ/QCR8, UQCR10/QCR9, UQCR11/QCR10 and a cleavage product of UQCRFS1). This cytochrome bc1 complex then forms a dimer. Requires heme b as cofactor.

It is found in the mitochondrion inner membrane. Its function is as follows. Component of the ubiquinol-cytochrome c reductase complex (complex III or cytochrome b-c1 complex) that is part of the mitochondrial respiratory chain. The b-c1 complex mediates electron transfer from ubiquinol to cytochrome c. Contributes to the generation of a proton gradient across the mitochondrial membrane that is then used for ATP synthesis. The protein is Cytochrome b (MT-CYB) of Corvus corax (Common raven).